The following is a 197-amino-acid chain: UPF0314 protein NGR_c32320 (197 aa).

Helical transmembrane passes span 16–36 (WIWLIACLGVVAIQILTQHLM), 66–86 (WYTPSHIIHGFLFYGLGYLLL), and 152–172 (LPVAVTVTIAIVLELFTGWII).

Belongs to the UPF0314 family.

Its subcellular location is the cell membrane. The polypeptide is UPF0314 protein NGR_c32320 (Sinorhizobium fredii (strain NBRC 101917 / NGR234)).